Consider the following 207-residue polypeptide: Urease accessory protein UreG (207 aa).

14–21 (GPVGSGKT) contributes to the GTP binding site.

It belongs to the SIMIBI class G3E GTPase family. UreG subfamily. Homodimer. UreD, UreF and UreG form a complex that acts as a GTP-hydrolysis-dependent molecular chaperone, activating the urease apoprotein by helping to assemble the nickel containing metallocenter of UreC. The UreE protein probably delivers the nickel.

The protein resides in the cytoplasm. Facilitates the functional incorporation of the urease nickel metallocenter. This process requires GTP hydrolysis, probably effectuated by UreG. In Chelativorans sp. (strain BNC1), this protein is Urease accessory protein UreG.